The primary structure comprises 484 residues: Glutamyl-tRNA(Gln) amidotransferase subunit A (484 aa).

Active-site charge relay system residues include Lys77 and Ser152. Residue Ser176 is the Acyl-ester intermediate of the active site.

It belongs to the amidase family. GatA subfamily. In terms of assembly, heterotrimer of A, B and C subunits.

It catalyses the reaction L-glutamyl-tRNA(Gln) + L-glutamine + ATP + H2O = L-glutaminyl-tRNA(Gln) + L-glutamate + ADP + phosphate + H(+). Functionally, allows the formation of correctly charged Gln-tRNA(Gln) through the transamidation of misacylated Glu-tRNA(Gln) in organisms which lack glutaminyl-tRNA synthetase. The reaction takes place in the presence of glutamine and ATP through an activated gamma-phospho-Glu-tRNA(Gln). The chain is Glutamyl-tRNA(Gln) amidotransferase subunit A from Pseudomonas aeruginosa (strain LESB58).